Consider the following 302-residue polypeptide: MEYLLQVKIAALVGLLFLTLIFGFIPARVKWFRDTDGTETHRTVLSLISCFAGGVFLSACFLDIIPDYLSDINTELHARQLETSFPLPEFIMAAGFFTVLILERIVLNCKEMRATHEERTTLIPERKSGHGHGHGDGPDPESSGHHVHVDFQAHSPFRSFMLFLSLSLHSIFEGLAIGLQTTDPKVVEICIAILVHKSIIVFSLAVKLVQSAIPPLWVAAYIGVFALMSPVGIAIGISVMEAQLAAGPLIQAILEGFAAGTFVYITFLEILPHELNSPGKQLLKVLFLLLGFSIMAALSFLG.

The Extracellular portion of the chain corresponds to 1–6; sequence MEYLLQ. Residues 7-27 traverse the membrane as a helical segment; it reads VKIAALVGLLFLTLIFGFIPA. The Cytoplasmic segment spans residues 28 to 44; the sequence is RVKWFRDTDGTETHRTV. Residues 45–65 form a helical membrane-spanning segment; the sequence is LSLISCFAGGVFLSACFLDII. Residues 66–80 are Extracellular-facing; the sequence is PDYLSDINTELHARQ. A helical transmembrane segment spans residues 81–101; that stretch reads LETSFPLPEFIMAAGFFTVLI. Residues 102–158 are Cytoplasmic-facing; the sequence is LERIVLNCKEMRATHEERTTLIPERKSGHGHGHGDGPDPESSGHHVHVDFQAHSPFR. The segment at 123-145 is disordered; the sequence is IPERKSGHGHGHGDGPDPESSGH. Residues 159-179 traverse the membrane as a helical segment; it reads SFMLFLSLSLHSIFEGLAIGL. The Extracellular portion of the chain corresponds to 180-185; the sequence is QTTDPK. Residues 186 to 206 traverse the membrane as a helical segment; it reads VVEICIAILVHKSIIVFSLAV. Topologically, residues 207–216 are cytoplasmic; that stretch reads KLVQSAIPPL. Residues 217–237 form a helical membrane-spanning segment; that stretch reads WVAAYIGVFALMSPVGIAIGI. The Extracellular portion of the chain corresponds to 238–251; sequence SVMEAQLAAGPLIQ. Residues 252 to 272 traverse the membrane as a helical segment; that stretch reads AILEGFAAGTFVYITFLEILP. Over 273-281 the chain is Cytoplasmic; sequence HELNSPGKQ. Residues 282-302 form a helical membrane-spanning segment; the sequence is LLKVLFLLLGFSIMAALSFLG.

This sequence belongs to the ZIP transporter (TC 2.A.5) family. Highest levels in ovary, lower levels in intestine and gill, barely detected in kidney.

It is found in the cell membrane. The protein localises to the endoplasmic reticulum membrane. It catalyses the reaction Zn(2+)(in) = Zn(2+)(out). In terms of biological role, transporter for the divalent cation Zn(2+). Mediates the influx of Zn(2+) into cells from extracellular space. This is Zinc transporter ZIP1 (slc39a1) from Takifugu rubripes (Japanese pufferfish).